Consider the following 135-residue polypeptide: Peptide methionine sulfoxide reductase MsrB (135 aa).

The MsrB domain maps to 9–131; sequence DDYWRSKLTD…NSASIQFEEE (123 aa). Zn(2+)-binding residues include cysteine 48, cysteine 51, cysteine 97, and cysteine 100. Cysteine 120 functions as the Nucleophile in the catalytic mechanism.

The protein belongs to the MsrB Met sulfoxide reductase family. It depends on Zn(2+) as a cofactor.

It catalyses the reaction L-methionyl-[protein] + [thioredoxin]-disulfide + H2O = L-methionyl-(R)-S-oxide-[protein] + [thioredoxin]-dithiol. This is Peptide methionine sulfoxide reductase MsrB from Teredinibacter turnerae (strain ATCC 39867 / T7901).